Here is a 1172-residue protein sequence, read N- to C-terminus: Thrombospondin-2 (1172 aa).

A signal peptide spans 1–18 (MVWRLVLLALWVWPSTQA). The Laminin G-like domain occupies 19–215 (GHQDKDTTFD…LQNVHLVFEN (197 aa)). The interval 19–232 (GHQDKDTTFD…KKGCQQGQGA (214 aa)) is heparin-binding. Asn151, Asn316, and Asn330 each carry an N-linked (GlcNAc...) asparagine glycan. One can recognise a VWFC domain in the interval 318-375 (SACWQDGRFFAENETWVVDSCTTCTCKKFKTICHQITCPPATCASPSFVEGECCPSCL). TSP type-1 domains are found at residues 381-431 (EEGW…SKCD), 437-492 (DGGW…APCP), and 494-549 (DGRW…RSCP). Cystine bridges form between Cys393–Cys425, Cys397–Cys430, Cys408–Cys415, Cys449–Cys486, Cys453–Cys491, Cys464–Cys476, Cys506–Cys543, Cys510–Cys548, Cys521–Cys533, Cys553–Cys564, Cys558–Cys574, Cys577–Cys588, Cys594–Cys610, Cys601–Cys619, Cys622–Cys646, Cys652–Cys665, Cys659–Cys678, Cys680–Cys691, Cys707–Cys715, Cys720–Cys740, Cys756–Cys776, Cys779–Cys799, Cys815–Cys835, Cys838–Cys858, Cys876–Cys896, Cys912–Cys932, and Cys948–Cys1169. Residue Asn457 is glycosylated (N-linked (GlcNAc...) asparagine). Positions 549–589 (PVDGCLSNPCFPGAQCSSFPDGSWSCGSCPVGFLGNGTHCE) constitute an EGF-like 1 domain. An N-linked (GlcNAc...) asparagine glycan is attached at Asn584. The region spanning 648 to 692 (PENPCKDKTHNCHKHAECIYLGHFSDPMYKCECQTGYAGDGLICG) is the EGF-like 2 domain. 8 TSP type-3 repeats span residues 693–728 (EDSD…NSGQ), 729–764 (EDFD…NPRQ), 765–787 (ADYD…NPAQ), 788–823 (IDTD…NTDQ), 824–846 (RDTD…NPDQ), 847–884 (TDVD…NANQ), 885–920 (ADHD…NPDQ), and 921–956 (EDLD…AISE). Asn710 carries an N-linked (GlcNAc...) asparagine glycan. Residues 843-931 (NPDQTDVDND…DLDGDGRGDI (89 aa)) are disordered. Residues 847–866 (TDVDNDLVGDQCDNNEDIDD) show a composition bias toward acidic residues. Polar residues predominate over residues 870–884 (QNNQDNCPYISNANQ). Positions 896–905 (CDPDDDNDGV) are enriched in acidic residues. Positions 928-930 (RGD) match the Cell attachment site motif. In terms of domain architecture, TSP C-terminal spans 960–1172 (RNFQMVPLDP…SDLKYECRDI (213 aa)). Asn1069 carries N-linked (GlcNAc...) asparagine glycosylation.

The protein belongs to the thrombospondin family. In terms of assembly, homotrimer; disulfide-linked. Interacts (via the TSP type I repeats) with CD36; the interaction conveys an antiangiogenic effect. Interacts (via the TSP type I repeats) with HRG; the interaction blocks the antiangiogenic effect of THBS2 with CD36. Can bind to fibrinogen, fibronectin, laminin and type V collagen. High expression in invertebral disk tissue.

Adhesive glycoprotein that mediates cell-to-cell and cell-to-matrix interactions. Ligand for CD36 mediating antiangiogenic properties. The chain is Thrombospondin-2 (THBS2) from Homo sapiens (Human).